Reading from the N-terminus, the 60-residue chain is Large ribosomal subunit protein uL30 (60 aa).

It belongs to the universal ribosomal protein uL30 family. Part of the 50S ribosomal subunit.

The sequence is that of Large ribosomal subunit protein uL30 from Bacillus pumilus (strain SAFR-032).